Consider the following 213-residue polypeptide: Pyridoxine/pyridoxamine 5'-phosphate oxidase (213 aa).

Substrate is bound by residues 9-12 (RKSY) and Lys67. Residues 62–67 (RVVLIK), 77–78 (YT), Arg83, and Lys84 contribute to the FMN site. Tyr124, Arg128, and Ser132 together coordinate substrate. FMN is bound by residues 141 to 142 (QS) and Trp185. Residue 191-193 (RLH) coordinates substrate. Residue Arg195 participates in FMN binding.

The protein belongs to the pyridoxamine 5'-phosphate oxidase family. In terms of assembly, homodimer. FMN is required as a cofactor.

It carries out the reaction pyridoxamine 5'-phosphate + O2 + H2O = pyridoxal 5'-phosphate + H2O2 + NH4(+). The enzyme catalyses pyridoxine 5'-phosphate + O2 = pyridoxal 5'-phosphate + H2O2. The protein operates within cofactor metabolism; pyridoxal 5'-phosphate salvage; pyridoxal 5'-phosphate from pyridoxamine 5'-phosphate: step 1/1. It functions in the pathway cofactor metabolism; pyridoxal 5'-phosphate salvage; pyridoxal 5'-phosphate from pyridoxine 5'-phosphate: step 1/1. Catalyzes the oxidation of either pyridoxine 5'-phosphate (PNP) or pyridoxamine 5'-phosphate (PMP) into pyridoxal 5'-phosphate (PLP). The polypeptide is Pyridoxine/pyridoxamine 5'-phosphate oxidase (Methylibium petroleiphilum (strain ATCC BAA-1232 / LMG 22953 / PM1)).